A 432-amino-acid chain; its full sequence is uncharacterized protein (432 aa).

Helical transmembrane passes span 35 to 55, 60 to 80, 112 to 132, 144 to 164, 185 to 205, 209 to 229, 242 to 262, 274 to 294, 313 to 333, 359 to 379, 384 to 404, and 408 to 428; these read VARV…VIYL, LPPA…IATG, VAGM…PLWS, VGLL…LGAL, LAVA…LWAA, AVAW…ASLL, AHSI…PVLL, GAVI…LSAM, LIAP…AAGL, AAAV…AAAL, LLGW…PMPL, and TVIA…AALA.

This sequence to M.tuberculosis Rv3630 and M.bovis Mb3654.

It is found in the cell membrane. This is an uncharacterized protein from Mycobacterium tuberculosis (strain CDC 1551 / Oshkosh).